The primary structure comprises 277 residues: Orotidine 5'-phosphate decarboxylase (277 aa).

Residue Lys-93 is the Proton donor of the active site.

It belongs to the OMP decarboxylase family. Type 2 subfamily.

It carries out the reaction orotidine 5'-phosphate + H(+) = UMP + CO2. It functions in the pathway pyrimidine metabolism; UMP biosynthesis via de novo pathway; UMP from orotate: step 2/2. This chain is Orotidine 5'-phosphate decarboxylase, found in Haloarcula marismortui (strain ATCC 43049 / DSM 3752 / JCM 8966 / VKM B-1809) (Halobacterium marismortui).